Here is a 978-residue protein sequence, read N- to C-terminus: Monofunctional C1-tetrahydrofolate synthase, mitochondrial (978 aa).

Over residues 1–10 (MGTRLPLVLR) the composition is skewed to low complexity. The N-terminal 31 residues, 1–31 (MGTRLPLVLRQLRRPPQPPGPPRRLRVPCRA), are a transit peptide targeting the mitochondrion. Positions 1-71 (MGTRLPLVLR…SPGGRTPAAR (71 aa)) are disordered. A methylenetetrahydrofolate dehydrogenase and cyclohydrolase region spans residues 31–348 (ASSGGGGGGG…REQQHRRWRL (318 aa)). Residues 33 to 45 (SGGGGGGGGGREG) show a composition bias toward gly residues. N6-acetyllysine; alternate is present on K189. K189 bears the N6-succinyllysine; alternate mark. The tract at residues 349–978 (HCLKLQPLSP…TETEQVKGLF (630 aa)) is formyltetrahydrofolate synthetase. S357 is subject to Phosphoserine. 423–430 (TPLGEGKS) provides a ligand contact to ATP. Residue K596 is modified to N6-succinyllysine.

This sequence in the N-terminal section; belongs to the tetrahydrofolate dehydrogenase/cyclohydrolase family. In the C-terminal section; belongs to the formate--tetrahydrofolate ligase family. In terms of assembly, homodimer. In terms of tissue distribution, detected in most tissues, highest expression found in placenta, thymus and brain. Low expression is found in liver and skeletal muscle. Up-regulated in colon adenocarcinoma.

Its subcellular location is the mitochondrion. The catalysed reaction is (6S)-5,6,7,8-tetrahydrofolate + formate + ATP = (6R)-10-formyltetrahydrofolate + ADP + phosphate. It participates in one-carbon metabolism; tetrahydrofolate interconversion. May provide the missing metabolic reaction required to link the mitochondria and the cytoplasm in the mammalian model of one-carbon folate metabolism complementing thus the enzymatic activities of MTHFD2. This is Monofunctional C1-tetrahydrofolate synthase, mitochondrial from Homo sapiens (Human).